The following is a 247-amino-acid chain: ATP synthase subunit a, chloroplastic (247 aa).

5 helical membrane passes run 38-58 (QVLI…IVTV), 95-115 (VPFI…GALL), 134-154 (INTT…AGLS), 199-219 (LVVV…VMFL), and 220-240 (GLFT…AYIG).

This sequence belongs to the ATPase A chain family. F-type ATPases have 2 components, CF(1) - the catalytic core - and CF(0) - the membrane proton channel. CF(1) has five subunits: alpha(3), beta(3), gamma(1), delta(1), epsilon(1). CF(0) has four main subunits: a, b, b' and c.

The protein resides in the plastid. It localises to the chloroplast thylakoid membrane. Its function is as follows. Key component of the proton channel; it plays a direct role in the translocation of protons across the membrane. The protein is ATP synthase subunit a, chloroplastic of Populus alba (White poplar).